A 159-amino-acid polypeptide reads, in one-letter code: MEKLTEKEKELIRVSWESLGKDKVPHGVIMFSRLFELEPALLNLFHYNTNCGTIQDCLSSPEFLDHVTKVMLVIDAAVSHLDNLHTLEDFLLNLGKKHQAVGVNTQSFAVVGESLLYMLQCSLGQGYTAPLRQAWLNMYTIVVAAMSRGWAKNGEHKTD.

In terms of domain architecture, Globin spans 3-151 (KLTEKEKELI…VVAAMSRGWA (149 aa)). 2 residues coordinate heme b: histidine 66 and histidine 98.

The protein belongs to the globin family. Monomer. Homodimers and homotetramers. Mainly monomeric but also detected as part of homodimers and homotetramers.

The protein localises to the cytoplasm. It is found in the cytosol. It localises to the mitochondrion matrix. It carries out the reaction Fe(III)-heme b-[protein] + nitric oxide + H2O = Fe(II)-heme b-[protein] + nitrite + 2 H(+). Functionally, monomeric globin with a bis-histidyl six-coordinate heme-iron atom through which it can bind dioxygen, carbon monoxide and nitric oxide. Could help transport oxygen and increase its availability to the metabolically active neuronal tissues, though its low quantity in tissues as well as its high affinity for dioxygen, which may limit its oxygen-releasing ability, argue against it. The ferrous/deoxygenated form exhibits a nitrite reductase activity and it could produce nitric oxide which in turn inhibits cellular respiration in response to hypoxia. In its ferrous/deoxygenated state, it may also exhibit GDI (Guanine nucleotide Dissociation Inhibitor) activity toward heterotrimeric G-alpha proteins, thereby regulating signal transduction to facilitate neuroprotective responses in the wake of hypoxia and associated oxidative stress. The chain is Neuroglobin-1 (ngb1) from Oncorhynchus mykiss (Rainbow trout).